Here is a 222-residue protein sequence, read N- to C-terminus: N-(5'-phosphoribosyl)anthranilate isomerase (222 aa).

The protein belongs to the TrpF family.

The enzyme catalyses N-(5-phospho-beta-D-ribosyl)anthranilate = 1-(2-carboxyphenylamino)-1-deoxy-D-ribulose 5-phosphate. It participates in amino-acid biosynthesis; L-tryptophan biosynthesis; L-tryptophan from chorismate: step 3/5. The protein is N-(5'-phosphoribosyl)anthranilate isomerase of Brevibacillus brevis (strain 47 / JCM 6285 / NBRC 100599).